The primary structure comprises 286 residues: Pantothenate synthetase (286 aa).

30-37 (MGALHEGH) serves as a coordination point for ATP. His-37 acts as the Proton donor in catalysis. (R)-pantoate is bound at residue Gln-61. Gln-61 contacts beta-alanine. 147–150 (GEKD) contacts ATP. Position 153 (Gln-153) interacts with (R)-pantoate. ATP-binding positions include Leu-176 and 184 to 187 (HSSR).

It belongs to the pantothenate synthetase family. Homodimer.

It is found in the cytoplasm. The enzyme catalyses (R)-pantoate + beta-alanine + ATP = (R)-pantothenate + AMP + diphosphate + H(+). Its pathway is cofactor biosynthesis; (R)-pantothenate biosynthesis; (R)-pantothenate from (R)-pantoate and beta-alanine: step 1/1. In terms of biological role, catalyzes the condensation of pantoate with beta-alanine in an ATP-dependent reaction via a pantoyl-adenylate intermediate. This chain is Pantothenate synthetase, found in Bartonella tribocorum (strain CIP 105476 / IBS 506).